A 368-amino-acid chain; its full sequence is Propane 2-monooxygenase, hydroxylase component small subunit (368 aa).

Positions 1–33 (MSAPAQPRERSFPSIEFTDAEADAREFPSSRSR) are disordered.

It belongs to the TmoE/XamoE family. As to quaternary structure, the propane 2-monooxygenase multicomponent enzyme system is composed of an electron transfer component and a monooxygenase component interacting with the effector protein PrmD. The electron transfer component is composed of a reductase (PrmB), and the monooxygenase component is formed by a large subunit (PrmA) and a small subunit (PrmC). Probably requires the presence of the chaperonin-like protein PrmG to ensure a productive folding, resulting of a soluble PrmC, which leads to the active form of PrmABCD.

The catalysed reaction is propane + NADH + O2 + H(+) = propan-2-ol + NAD(+) + H2O. It carries out the reaction phenol + NADH + O2 + H(+) = hydroquinone + NAD(+) + H2O. Component of the propane 2-monooxygenase multicomponent enzyme system which is involved in the degradation of propane via the O2-dependent hydroxylation of propane. Under acetone induction, also able to catalyze the oxidation of phenol to yield hydroquinone. In Gordonia sp. (strain TY-5), this protein is Propane 2-monooxygenase, hydroxylase component small subunit.